The sequence spans 758 residues: 5-methyltetrahydropteroyltriglutamate--homocysteine methyltransferase (758 aa).

5-methyltetrahydropteroyltri-L-glutamate contacts are provided by residues 17–20 (RELK) and K113. Residues 433–435 (IGS) and E486 contribute to the L-homocysteine site. L-methionine is bound by residues 433–435 (IGS) and E486. 5-methyltetrahydropteroyltri-L-glutamate contacts are provided by residues 517 to 518 (RC) and W563. Position 601 (D601) interacts with L-homocysteine. D601 is a binding site for L-methionine. E607 contributes to the 5-methyltetrahydropteroyltri-L-glutamate binding site. Positions 643, 645, and 667 each coordinate Zn(2+). H696 (proton donor) is an active-site residue. C728 is a Zn(2+) binding site.

This sequence belongs to the vitamin-B12 independent methionine synthase family. Zn(2+) serves as cofactor.

The catalysed reaction is 5-methyltetrahydropteroyltri-L-glutamate + L-homocysteine = tetrahydropteroyltri-L-glutamate + L-methionine. The protein operates within amino-acid biosynthesis; L-methionine biosynthesis via de novo pathway; L-methionine from L-homocysteine (MetE route): step 1/1. Functionally, catalyzes the transfer of a methyl group from 5-methyltetrahydrofolate to homocysteine resulting in methionine formation. The protein is 5-methyltetrahydropteroyltriglutamate--homocysteine methyltransferase of Nitrosomonas europaea (strain ATCC 19718 / CIP 103999 / KCTC 2705 / NBRC 14298).